A 254-amino-acid chain; its full sequence is Activity-regulated cytoskeleton associated protein 1 (254 aa).

The protein belongs to the ARC/ARG3.1 family. Homooligomer; homooligomerizes into virion-like capsids. In terms of tissue distribution, expressed in a specific population of brain neurons, named E347, that are necessary and sufficient for proper body fat storage.

Its subcellular location is the extracellular vesicle membrane. The protein localises to the synapse. Functionally, master regulator of synaptic plasticity that self-assembles into virion-like capsids that encapsulate RNAs and mediate intercellular RNA transfer from motorneurons to muscles. Arc1 protein is released from motorneurons in extracellular vesicles that mediate the transfer of Arc1 mRNA into muscle cells, where Arc1 mRNA can undergo activity-dependent translation. Intercellular transfer od Arc1 mRNA is required for synaptic plasticity at the neuromuscular junction. May play a role in energy balance: required for regulation of body fat by a specific population of brain neurons, named E347, that are necessary and sufficient for proper body fat storage. The sequence is that of Activity-regulated cytoskeleton associated protein 1 from Drosophila melanogaster (Fruit fly).